The sequence spans 352 residues: Tropomodulin-3 (352 aa).

S25 is modified (phosphoserine).

The protein belongs to the tropomodulin family. In terms of assembly, binds to the N-terminus of tropomyosin and to actin. Interacts with FLII. Ubiquitous.

The protein resides in the cytoplasm. It is found in the cytoskeleton. In terms of biological role, blocks the elongation and depolymerization of the actin filaments at the pointed end. The Tmod/TM complex contributes to the formation of the short actin protofilament, which in turn defines the geometry of the membrane skeleton. The protein is Tropomodulin-3 (Tmod3) of Mus musculus (Mouse).